A 753-amino-acid polypeptide reads, in one-letter code: Protein-lysine N-methyltransferase SMYD4 (753 aa).

112–114 provides a ligand contact to S-adenosyl-L-methionine; that stretch reads RSA. An SET domain is found at 186–528; sequence DGVSVYFSSD…AGQEILHCYG (343 aa). 8 residues coordinate Zn(2+): Cys246, Cys249, Cys259, Cys262, Cys268, Cys272, His281, and Cys285. Residues 246–285 form an MYND-type zinc finger; that stretch reads CHHCLSQSLSFVPCPKCSYARYCGESCQKDAWDQWHQWEC. S-adenosyl-L-methionine contacts are provided by residues 467–468 and Tyr527; that span reads NH.

Belongs to the class V-like SAM-binding methyltransferase superfamily.

The protein resides in the nucleus. It localises to the cytoplasm. It carries out the reaction L-lysyl-[protein] + S-adenosyl-L-methionine = N(6)-methyl-L-lysyl-[protein] + S-adenosyl-L-homocysteine + H(+). Functionally, protein-lysine N-methyltransferase. Monomethylates PRMT5, modulating its transcriptional activity. May also act as a histone methyltransferase. Plays a critical role in cardiac development. Acts as a key epigenetic regulator of gene expression during cardiac development via its dual activities as a methyltransferase and negative regulator of HDAC1. This chain is Protein-lysine N-methyltransferase SMYD4 (smyd4), found in Danio rerio (Zebrafish).